The chain runs to 500 residues: Maturase K (500 aa).

The protein belongs to the intron maturase 2 family. MatK subfamily.

The protein localises to the plastid. It is found in the chloroplast. Functionally, usually encoded in the trnK tRNA gene intron. Probably assists in splicing its own and other chloroplast group II introns. This chain is Maturase K, found in Proboscidea louisianica (Louisiana Devil's-claw).